The following is a 170-amino-acid chain: Transcription factor E (170 aa).

Residues 1–93 (MKEAYLYIVE…TWYVDDDVIR (93 aa)) form the HTH TFE/IIEalpha-type domain.

It belongs to the TFE family. Monomer. Interaction with RNA polymerase subunits RpoF and RpoE is necessary for Tfe stimulatory transcription activity. Able to interact with Tbp and RNA polymerase in the absence of DNA promoter. Interacts both with the preinitiation and elongation complexes.

Transcription factor that plays a role in the activation of archaeal genes transcribed by RNA polymerase. Facilitates transcription initiation by enhancing TATA-box recognition by TATA-box-binding protein (Tbp), and transcription factor B (Tfb) and RNA polymerase recruitment. Not absolutely required for transcription in vitro, but particularly important in cases where Tbp or Tfb function is not optimal. It dynamically alters the nucleic acid-binding properties of RNA polymerases by stabilizing the initiation complex and destabilizing elongation complexes. Seems to translocate with the RNA polymerase following initiation and acts by binding to the non template strand of the transcription bubble in elongation complexes. The polypeptide is Transcription factor E (Pyrobaculum neutrophilum (strain DSM 2338 / JCM 9278 / NBRC 100436 / V24Sta) (Thermoproteus neutrophilus)).